The primary structure comprises 193 residues: Acyl carrier protein phosphodiesterase (193 aa).

The protein belongs to the AcpH family.

It carries out the reaction holo-[ACP] + H2O = apo-[ACP] + (R)-4'-phosphopantetheine + H(+). Converts holo-ACP to apo-ACP by hydrolytic cleavage of the phosphopantetheine prosthetic group from ACP. In Escherichia coli O6:K15:H31 (strain 536 / UPEC), this protein is Acyl carrier protein phosphodiesterase.